We begin with the raw amino-acid sequence, 327 residues long: 1-aminocyclopropane-1-carboxylate oxidase 1 (327 aa).

Residues 157-257 (PTFGTKVSNY…RMSIASFYNP (101 aa)) enclose the Fe2OG dioxygenase domain. Fe cation is bound by residues His181, Asp183, and His238.

It belongs to the iron/ascorbate-dependent oxidoreductase family. Fe cation serves as cofactor.

The enzyme catalyses 1-aminocyclopropane-1-carboxylate + L-ascorbate + O2 = ethene + L-dehydroascorbate + hydrogen cyanide + CO2 + 2 H2O. Its pathway is alkene biosynthesis; ethylene biosynthesis via S-adenosyl-L-methionine; ethylene from S-adenosyl-L-methionine: step 2/2. The protein is 1-aminocyclopropane-1-carboxylate oxidase 1 (ACO1) of Doritaenopsis sp. (Moth orchid).